The sequence spans 573 residues: MAALAVNKPGAGVDSGRQGSRGTAVVKVLECGVCEDVFSLQGDKVPRLLLCGHTVCHDCLTRLPLHGRAIRCPFDRQVTDLGDSGVWGLKKNFALLELLERLQNGHIGQYGAAEEALGISGESIIRCDEDEAHVASVYCTVCATHLCSECSQVTHSTKTLAKHRRVPLADKPHEKTMCCQHQVHAIEFVCLEEACQTSPLMCCVCKEYGKHQGHKHSVLEPEANQIRASILDMAHCIRTFTEEISDYSRKLVGIVQHIEGGEQIVEDGIGMAHTEHVPGTAENARSCVRAYFSDLHETLCRQEEMALSVVDAHVREKLIWLRQQQEDMTILLSQVSTACLHCKTLQQDDCRVVLAKQEITRLLETLQKQQQQFTEVADHIQLDASIPVTFTKDNRVYHGPKMEIRVVTLGLDGAGKTTILFKLKQDEFMQPIPTIGFNVETVEYKNLKFTIWDVGGKHKLRPLWKHYYLNTQAVVFVVDSSHRDRISEAHSELAKLLTEKELRDALLLIFANKQDVAGALSVEEITELLSLHKLCCGRSWYIQGCDARSGMGLYEGLDWLSRQLVAAGVLDVA.

Residues 31-76 form an RING-type; degenerate zinc finger; sequence CGVCEDVFSLQGDKVPRLLLCGHTVCHDCLTRLPLHGRAIRCPFDR. Residues 122–168 form a B box-type; degenerate zinc finger; the sequence is ESIIRCDEDEAHVASVYCTVCATHLCSECSQVTHSTKTLAKHRRVPL. Positions 351 to 378 form a coiled coil; that stretch reads RVVLAKQEITRLLETLQKQQQQFTEVAD. The segment at 390-573 is ARF-like; that stretch reads FTKDNRVYHG…LVAAGVLDVA (184 aa). GTP is bound by residues 411–418, 454–458, and 513–516; these read LDGAGKTT, VGGKH, and KQDV.

The protein in the C-terminal section; belongs to the small GTPase superfamily. Arf family. As to quaternary structure, homodimer. Interacts with PSCD1. Interacts with UBE2D2. Interacts with TBK1 (via N-terminal kinase domain) and p62/SQSTM1.

Its subcellular location is the cytoplasm. It localises to the endomembrane system. It is found in the golgi apparatus membrane. The protein localises to the lysosome membrane. The enzyme catalyses S-ubiquitinyl-[E2 ubiquitin-conjugating enzyme]-L-cysteine + [acceptor protein]-L-lysine = [E2 ubiquitin-conjugating enzyme]-L-cysteine + N(6)-ubiquitinyl-[acceptor protein]-L-lysine.. The protein operates within protein modification; protein ubiquitination. In terms of biological role, acts as an E3 ubiquitin-protein ligase. Plays an essential role in autophagy activation during viral infection. Mechanistically, activates TANK-binding kinase 1/TBK1 by facilitating its dimerization and ability to phosphorylate the selective autophagy receptor SQSTM1. In order to achieve this function, TRIM23 mediates 'Lys-27'-linked auto-ubiquitination of its ADP-ribosylation factor (ARF) domain to induce its GTPase activity and its recruitment to autophagosomes. This is E3 ubiquitin-protein ligase TRIM23 (Trim23) from Rattus norvegicus (Rat).